The chain runs to 151 residues: Large ribosomal subunit protein bL9 (151 aa).

The protein belongs to the bacterial ribosomal protein bL9 family.

Functionally, binds to the 23S rRNA. The chain is Large ribosomal subunit protein bL9 from Acidobacterium capsulatum (strain ATCC 51196 / DSM 11244 / BCRC 80197 / JCM 7670 / NBRC 15755 / NCIMB 13165 / 161).